Here is a 146-residue protein sequence, read N- to C-terminus: Hemoglobin subunit beta (146 aa).

One can recognise a Globin domain in the interval 2-146 (HWSAEEKQLI…VAHALARKYH (145 aa)). Positions 63 and 92 each coordinate heme b.

Belongs to the globin family. In terms of assembly, heterotetramer of two alpha chains and two beta chains. As to expression, red blood cells.

Its function is as follows. Involved in oxygen transport from the lung to the various peripheral tissues. The polypeptide is Hemoglobin subunit beta (HBB) (Stercorarius maccormicki (South polar skua)).